A 5911-amino-acid polypeptide reads, in one-letter code: Nonribosomal peptide synthetase 30 (5911 aa).

The disordered stretch occupies residues 1–22 (MVPEKPTAQSKSGIGEPFRAGD). Residues 352-754 (ALIQPSSTAV…GRKDAQVKIR (403 aa)) form an adenylation 1 region. The 78-residue stretch at 891-968 (PRPFSVEYSL…EAAAIVARGT (78 aa)) folds into the Carrier 1 domain. Serine 928 bears the O-(pantetheine 4'-phosphoryl)serine mark. The interval 1007–1422 (EDAFPCTPLQ…ERLIFVIDQL (416 aa)) is condensation 1. An adenylation 2 region spans residues 1467-1865 (ERALSQPDRP…SLMFVGRKAD (399 aa)). Residues 2001 to 2077 (QPTSELEAEM…NICSHSYYCS (77 aa)) enclose the Carrier 2 domain. Serine 2038 carries the post-translational modification O-(pantetheine 4'-phosphoryl)serine. The tract at residues 2121 to 2538 (QDAYPCTPLQ…GPDINMSDIG (418 aa)) is condensation 2. The adenylation 3 stretch occupies residues 2568–2977 (EEQARLRPEA…GRKDSQVKIR (410 aa)). In terms of domain architecture, Carrier 3 spans 3110-3186 (QPSTNAQREL…LIADNSKSIK (77 aa)). Serine 3147 carries the O-(pantetheine 4'-phosphoryl)serine modification. The tract at residues 3227–3652 (VQDAYPCTPL…LELVIQAFMA (426 aa)) is condensation 3. The interval 3701–4108 (EERVREQPNA…GRKDSQVKIR (408 aa)) is adenylation 4. A Carrier 4 domain is found at 4248–4325 (PPTTPLECQM…DIIATMTKNK (78 aa)). O-(pantetheine 4'-phosphoryl)serine is present on serine 4285. The tract at residues 4326 to 4347 (ATGASRRLPRDDDEPIPHTKYA) is disordered. The interval 4353 to 4793 (SYAQGRLWFL…SLPLLTEDGR (441 aa)) is condensation 4. The segment at 4819–5231 (FKEQVSRHPN…GRMDVQVKIR (413 aa)) is adenylation 5. Positions 5360–5436 (KPTTDMEVAL…ALARRQEEIV (77 aa)) constitute a Carrier 5 domain. Serine 5397 bears the O-(pantetheine 4'-phosphoryl)serine mark. Residues 5474–5828 (VEDMLPLTSM…GIKMKLHFFT (355 aa)) form a condensation 5 region.

This sequence belongs to the NRP synthetase family.

It participates in secondary metabolite biosynthesis. Functionally, nonribosomal peptide synthetase; part of the gene cluster that mediates the biosynthesis of sansalvamide, a cyclic pentadepsipeptide that shows promising results as potential anti-cancer drug. The nonribosmal peptide synthetase NRPS30 produces sansalvamide by incorporating successively one phenylalanine, one leucine, one alpha-hydroxyisocaproic acid (HICA), one valine and one leucine before sansalvamide is released from by cyclization by the terminal C domain of NRPS30. The HICA residue is probably provided by reduction of alpha-ketoisocaproate by the cluster-specific aldo-keto reductase (NECHADRAFT_45914). This Fusarium vanettenii (strain ATCC MYA-4622 / CBS 123669 / FGSC 9596 / NRRL 45880 / 77-13-4) (Fusarium solani subsp. pisi) protein is Nonribosomal peptide synthetase 30.